A 264-amino-acid chain; its full sequence is Thymidylate synthase (264 aa).

A dUMP-binding site is contributed by R21. H51 provides a ligand contact to (6R)-5,10-methylene-5,6,7,8-tetrahydrofolate. 126 to 127 (RR) contacts dUMP. The active-site Nucleophile is C146. Residues 166-169 (RSCD), N177, and 207-209 (HLY) each bind dUMP. Position 169 (D169) interacts with (6R)-5,10-methylene-5,6,7,8-tetrahydrofolate. (6R)-5,10-methylene-5,6,7,8-tetrahydrofolate is bound at residue A263.

It belongs to the thymidylate synthase family. Bacterial-type ThyA subfamily. As to quaternary structure, homodimer.

It is found in the cytoplasm. It carries out the reaction dUMP + (6R)-5,10-methylene-5,6,7,8-tetrahydrofolate = 7,8-dihydrofolate + dTMP. It functions in the pathway pyrimidine metabolism; dTTP biosynthesis. In terms of biological role, catalyzes the reductive methylation of 2'-deoxyuridine-5'-monophosphate (dUMP) to 2'-deoxythymidine-5'-monophosphate (dTMP) while utilizing 5,10-methylenetetrahydrofolate (mTHF) as the methyl donor and reductant in the reaction, yielding dihydrofolate (DHF) as a by-product. This enzymatic reaction provides an intracellular de novo source of dTMP, an essential precursor for DNA biosynthesis. This Shewanella putrefaciens (strain CN-32 / ATCC BAA-453) protein is Thymidylate synthase.